Reading from the N-terminus, the 457-residue chain is Argininosuccinate lyase (457 aa).

The protein belongs to the lyase 1 family. Argininosuccinate lyase subfamily.

It localises to the cytoplasm. The catalysed reaction is 2-(N(omega)-L-arginino)succinate = fumarate + L-arginine. Its pathway is amino-acid biosynthesis; L-arginine biosynthesis; L-arginine from L-ornithine and carbamoyl phosphate: step 3/3. The polypeptide is Argininosuccinate lyase (Erwinia tasmaniensis (strain DSM 17950 / CFBP 7177 / CIP 109463 / NCPPB 4357 / Et1/99)).